The chain runs to 358 residues: Nitric oxide synthase oxygenase (358 aa).

Heme is bound at residue cysteine 62.

This sequence belongs to the NOS family. Bacterial NOS oxygenase subfamily. In terms of assembly, homodimer. The cofactor is heme. (6S)-5,6,7,8-tetrahydrofolate serves as cofactor.

The enzyme catalyses 3 reduced [flavodoxin] + 2 L-arginine + 4 O2 = 3 oxidized [flavodoxin] + 2 L-citrulline + 2 nitric oxide + 4 H2O + 5 H(+). Functionally, catalyzes the production of nitric oxide. In Staphylococcus aureus (strain COL), this protein is Nitric oxide synthase oxygenase (nos).